Consider the following 336-residue polypeptide: Calcium-gated potassium channel MthK (336 aa).

Residues 1–20 (MVLVIEIIRKHLPRVLKVPA) lie on the Cytoplasmic side of the membrane. Residues 21–41 (TRILLLVLAVIIYGTAGFHFI) form a helical membrane-spanning segment. Residues 42-48 (EGESWTV) lie on the Extracellular side of the membrane. The segment at residues 49–58 (SLYWTFVTIA) is an intramembrane region (helical; Pore-forming). An intramembrane region (pore-forming) is located at residues 59 to 64 (TVGYGD). Residues 59–64 (TVGYGD) carry the Selectivity filter motif. Over 65 to 69 (YSPST) the chain is Extracellular. The chain crosses the membrane as a helical span at residues 70-95 (PLGMYFTVTLIVLGIGTFAVAVERLL). Topologically, residues 96–106 (EFLINREQMKL) are cytoplasmic. Positions 115–230 (SRHVVICGWS…RMAGADQVIS (116 aa)) constitute an RCK N-terminal domain. Residues aspartate 184, glutamate 210, and glutamate 212 each coordinate Ca(2+). Residues 252–336 (VQDVLAEEST…IERLKNYISA (85 aa)) enclose the RCK C-terminal domain.

Homotetramer.

It is found in the cell membrane. Functionally, calcium-gated potassium channel. This is Calcium-gated potassium channel MthK (mthK) from Methanothermobacter thermautotrophicus (strain ATCC 29096 / DSM 1053 / JCM 10044 / NBRC 100330 / Delta H) (Methanobacterium thermoautotrophicum).